The following is a 365-amino-acid chain: UPF0324 membrane protein Cj0999c (365 aa).

Transmembrane regions (helical) follow at residues 12–34 (IVRS…MYLS), 44–63 (HLAA…PWFF), 83–100 (LGIV…LLSV), 105–127 (FLLS…TKIF), 134–153 (SMLV…LALE), 163–185 (GILA…PIAF), 197–219 (AMGV…AEMA), 234–256 (VIIK…YFFA), 269–288 (SITI…LNTY), 303–325 (IISL…LGLQ), and 338–360 (VFGL…TLAF).

The protein belongs to the UPF0324 family.

The protein localises to the cell membrane. The chain is UPF0324 membrane protein Cj0999c from Campylobacter jejuni subsp. jejuni serotype O:2 (strain ATCC 700819 / NCTC 11168).